We begin with the raw amino-acid sequence, 170 residues long: Superoxide dismutase [Fe] (170 aa).

Residues His27, His81, Asp163, and His167 each contribute to the Fe cation site.

Belongs to the iron/manganese superoxide dismutase family. As to quaternary structure, homodimer. Fe cation is required as a cofactor.

It carries out the reaction 2 superoxide + 2 H(+) = H2O2 + O2. In terms of biological role, destroys superoxide anion radicals which are normally produced within the cells and which are toxic to biological systems. This is Superoxide dismutase [Fe] (sodA) from Raoultella planticola (Klebsiella planticola).